The sequence spans 594 residues: Potassium-transporting ATPase potassium-binding subunit (594 aa).

Transmembrane regions (helical) follow at residues 3-23 (ADFL…APLL), 67-87 (AVAM…LQRL), 136-156 (ALTV…IALV), 179-199 (LYVL…QGVV), 287-307 (LEML…GEMV), 314-334 (VAIL…AAYF), 415-435 (GLYG…LMIG), 453-473 (VALV…VAVL), 519-539 (VLLG…ILAL), and 562-582 (LFVA…YVPA).

This sequence belongs to the KdpA family. In terms of assembly, the system is composed of three essential subunits: KdpA, KdpB and KdpC.

The protein resides in the cell inner membrane. Functionally, part of the high-affinity ATP-driven potassium transport (or Kdp) system, which catalyzes the hydrolysis of ATP coupled with the electrogenic transport of potassium into the cytoplasm. This subunit binds the periplasmic potassium ions and delivers the ions to the membrane domain of KdpB through an intramembrane tunnel. This chain is Potassium-transporting ATPase potassium-binding subunit, found in Bordetella parapertussis (strain 12822 / ATCC BAA-587 / NCTC 13253).